Here is a 447-residue protein sequence, read N- to C-terminus: D-ribitol-5-phosphate cytidylyltransferase (447 aa).

It belongs to the IspD/TarI cytidylyltransferase family. IspD subfamily. Homodimer.

It localises to the cytoplasm. It is found in the cytosol. It catalyses the reaction D-ribitol 5-phosphate + CTP + H(+) = CDP-L-ribitol + diphosphate. The catalysed reaction is D-ribose 5-phosphate + CTP + H(+) = CDP-D-ribose + diphosphate. It carries out the reaction D-ribulose 5-phosphate + CTP + H(+) = CDP-D-ribulose + diphosphate. It functions in the pathway protein modification; protein glycosylation. In terms of biological role, cytidylyltransferase required for protein O-linked mannosylation. Catalyzes the formation of CDP-ribitol nucleotide sugar from D-ribitol 5-phosphate. CDP-ribitol is a substrate of FKTN during the biosynthesis of the phosphorylated O-mannosyl trisaccharide (N-acetylgalactosamine-beta-3-N-acetylglucosamine-beta-4-(phosphate-6-)mannose), a carbohydrate structure present in alpha-dystroglycan (DAG1), which is required for binding laminin G-like domain-containing extracellular proteins with high affinity. Shows activity toward other pentose phosphate sugars and mediates formation of CDP-ribulose or CDP-ribose using CTP and ribulose-5-phosphate or ribose-5-phosphate, respectively. Not involved in dolichol production. In Rattus norvegicus (Rat), this protein is D-ribitol-5-phosphate cytidylyltransferase (Crppa).